Reading from the N-terminus, the 486-residue chain is Na(+)/H(+) antiporter NhaA 2 (486 aa).

The next 11 membrane-spanning stretches (helical) occupy residues 58–78 (GGLLLLAATVAALVWANTAPG), 102–122 (LTDWVADALLAVFFFTVGLEL), 138–158 (ALPVAAAAGGMLAPALLCLAL), 168–188 (AWAIPVATDIAFALGVLSLAG), 198–218 (VLLGLAVADDLGGILLIALGL), 220–240 (HGINPAWLATATTLLATTALA), 260–280 (ISLHAAGIHPTVAGVALGLLV), 300–320 (LGPINAAVILPAFALSATGVS), 338–358 (VAVGLLAGKLLGVPAGAWLAV), 374–394 (LVPLGLLAGIGYTVSLLITRL), and 404–424 (GASTAILTASVAASALALTAL). The disordered stretch occupies residues 432-486 (GAPATRGSSRPATQVGGVAGPIPQTRRESDGGPTGGQEPPPARVRRAPPASPHPR).

This sequence belongs to the NhaA Na(+)/H(+) (TC 2.A.33) antiporter family.

Its subcellular location is the cell membrane. It carries out the reaction Na(+)(in) + 2 H(+)(out) = Na(+)(out) + 2 H(+)(in). Functionally, na(+)/H(+) antiporter that extrudes sodium in exchange for external protons. The protein is Na(+)/H(+) antiporter NhaA 2 of Frankia alni (strain DSM 45986 / CECT 9034 / ACN14a).